We begin with the raw amino-acid sequence, 418 residues long: MKVLDELRDLVEDAIKGSTVFEKSKVLTPDYIPKNLPHREKQIKELSINFREILSNPGSTSVRVVISGKTGTGKTVTTKKFGELFSEIAKEKGLRVVYTHINCHRQRTLYLMLVEIANQLNLQIPNRGLSSQETFKLIYDYLEKRNIQLIITLDEFDYFVSTSPVEDIYFLVRIYDELNALVKRIHYIFILRELTSLASLDKSIKDHVIKNVIEFPPYTSEELYDILMDRIVNEKAFREGAVLEETVRFISDIYGIDKGGSGNARLALETLELAGKIADTEGSLLVTIDHAKKANSKINPELSIILDTIRDLDLHQLLVVKAIMNLHKKEGDDFFSMGKVEEEYNIVAKDLGEIPRKHTQVFEYIRKLKLMGLITARQSGKGMRGRTTLISLSVPISEELDNLINNEIRDRLLQQKNY.

ATP is bound by residues 72–76 (TGKTV), Tyr-218, and Arg-230.

The protein belongs to the CDC6/cdc18 family.

In terms of biological role, involved in regulation of DNA replication. The sequence is that of ORC1-type DNA replication protein 2 (cdc6-2) from Sulfurisphaera tokodaii (strain DSM 16993 / JCM 10545 / NBRC 100140 / 7) (Sulfolobus tokodaii).